Reading from the N-terminus, the 219-residue chain is Large ribosomal subunit protein uL16 (219 aa).

It belongs to the universal ribosomal protein uL16 family. In terms of assembly, component of the small ribosomal subunit. Mature ribosomes consist of a small (40S) and a large (60S) subunit. The 40S subunit contains about 33 different proteins and 1 molecule of RNA (18S). The 60S subunit contains about 49 different proteins and 3 molecules of RNA (25S, 5.8S and 5S).

The polypeptide is Large ribosomal subunit protein uL16 (RPL10) (Encephalitozoon cuniculi (strain GB-M1) (Microsporidian parasite)).